The primary structure comprises 203 residues: Imidazoleglycerol-phosphate dehydratase (203 aa).

Residues 184–203 (DPRRSSQIPSSKGVLEQAGQ) are disordered.

It belongs to the imidazoleglycerol-phosphate dehydratase family.

The protein localises to the cytoplasm. It catalyses the reaction D-erythro-1-(imidazol-4-yl)glycerol 3-phosphate = 3-(imidazol-4-yl)-2-oxopropyl phosphate + H2O. It functions in the pathway amino-acid biosynthesis; L-histidine biosynthesis; L-histidine from 5-phospho-alpha-D-ribose 1-diphosphate: step 6/9. The chain is Imidazoleglycerol-phosphate dehydratase from Prochlorococcus marinus (strain NATL1A).